The following is a 272-amino-acid chain: uncharacterized protein (272 aa).

It belongs to the chlamydial CPn_0389/CT_041/TC_0311 family.

This is an uncharacterized protein from Chlamydia pneumoniae (Chlamydophila pneumoniae).